A 384-amino-acid polypeptide reads, in one-letter code: G protein-coupled receptor 88 (384 aa).

Over 1-35 the chain is Extracellular; sequence MTNSSSTSTSSTTGGSLLLLCEEEESWAGRRIPVS. Asn3 carries N-linked (GlcNAc...) asparagine glycosylation. A helical transmembrane segment spans residues 36–56; the sequence is LLYSGLAIGGTLANGMVIYLV. Over 57-73 the chain is Cytoplasmic; that stretch reads SSFRKLQTTSNAFIVNG. The helical transmembrane segment at 74-94 threads the bilayer; it reads CAADLSVCALWMPQEAVLGLL. The Extracellular portion of the chain corresponds to 95–116; that stretch reads PTGSAEPPADWDGAGGSYRLLR. A helical membrane pass occupies residues 117 to 136; the sequence is GGLLGLGLTVSLLSHCLVAL. The Cytoplasmic segment spans residues 137 to 158; sequence NRYLLITRAPATYQALYQRRHT. Residues 159-179 traverse the membrane as a helical segment; it reads AGMLALSWALALGLVLLLPPW. Over 180-195 the chain is Extracellular; it reads APRPGAAPPRVHYPAL. Residues 196–216 form a helical membrane-spanning segment; that stretch reads LAAAALLAQTALLLHCYLGIV. At 217 to 285 the chain is on the cytoplasmic side; that stretch reads RRVRVSVKRV…RAQRRLSGLS (69 aa). Residues 286 to 306 traverse the membrane as a helical segment; sequence VLLLCCVFLLATQPLVWVSLA. The Extracellular portion of the chain corresponds to 307 to 310; the sequence is SGFS. A helical membrane pass occupies residues 311 to 331; it reads LPVPWGVQAASWLLCCALSAL. The Cytoplasmic portion of the chain corresponds to 332-384; that stretch reads NPLLYTWRNEEFRRSVRSVLPGVGDAAAAAVAATAVPAVSQAQLGTRAAGQHW.

This sequence belongs to the G-protein coupled receptor 1 family. As to expression, expressed predominantly in the striatum.

The protein resides in the cell membrane. Its subcellular location is the cell projection. The protein localises to the cilium membrane. It localises to the cytoplasm. It is found in the nucleus. Functionally, orphan G protein-coupled receptor implicated in a large repertoire of behavioral responses that engage motor activities, spatial learning, and emotional processing. May play a role in the regulation of cognitive and motor function. Couples with the heterotrimeric G protein complex of the G(i) subfamily, consisting of GNAI1, GNB1 and GNG2, thereby acting through a G(i)-mediated pathway. Plays a role in the attenuation of D1 dopamine receptor (D1R)-mediated cAMP response in ciliated cells. In non-ciliated cells, involved in the inhibition of the beta-2 adrenergic receptor (B2AR) response. The sequence is that of G protein-coupled receptor 88 (GPR88) from Homo sapiens (Human).